Reading from the N-terminus, the 50-residue chain is uncharacterized protein (50 aa).

This is an uncharacterized protein from Thermoproteus tenax virus 1 (strain KRA1) (TTV1).